Reading from the N-terminus, the 536-residue chain is MARACPSLAWQLPWALVAGLAQAASLAWPWGGEPLWWLQLASMAMLAWLLRPGADRAVAWHRAALIGGVFATAWLASTFWWLFISMHRYGALPAPLAAAAVLVLAAFLASYYAAAMGLFCRLAPLHRAGAALLFGACWLLAELARGSLWTGFPWGAGGYAHADGPLRVLARYVGVYGIGAVAALLALLCVQWRRADLRHWPMWLLLLAGAAALALAAVQRTCAIDLCDTPPPWRRDPTLSVELLQGNIAQDEKFRPGSGVALALQWYGQALRTARAQLVVAPETALPLLPQQLMPGYLEGLARHYAQGPQAALLGIPWGDQATGYTNSVLGLSPATGAMPYRYDKHHLVPFGEFVPPFFKWFTARMQIPLGNFNRAGVGQASFAWAGQRLAPNICYEDLFGEELGARFIDPAQAPTVFVNLSNIGWFGNTIAIDQHLQISRMRALEFERPMVRATNTGATAIIDHRGQVTHQLARHTRGVLRGQVHGRGLDAHSGWAITPYAWWVARWGLWPLWALAALALAWAMRAQRMRRARGA.

6 helical membrane-spanning segments follow: residues 34–54, 64–84, 89–109, 129–149, 172–192, and 199–219; these read PLWW…RPGA, ALIG…WLFI, YGAL…AFLA, GAAL…GSLW, YVGV…CVQW, and HWPM…AAVQ. A CN hydrolase domain is found at 244 to 487; sequence LQGNIAQDEK…RGVLRGQVHG (244 aa). The active-site Proton acceptor is glutamate 283. Lysine 345 is a catalytic residue. Cysteine 395 serves as the catalytic Nucleophile. A helical transmembrane segment spans residues 503 to 523; it reads WWVARWGLWPLWALAALALAW.

Belongs to the CN hydrolase family. Apolipoprotein N-acyltransferase subfamily.

The protein localises to the cell inner membrane. The enzyme catalyses N-terminal S-1,2-diacyl-sn-glyceryl-L-cysteinyl-[lipoprotein] + a glycerophospholipid = N-acyl-S-1,2-diacyl-sn-glyceryl-L-cysteinyl-[lipoprotein] + a 2-acyl-sn-glycero-3-phospholipid + H(+). The protein operates within protein modification; lipoprotein biosynthesis (N-acyl transfer). Its function is as follows. Catalyzes the phospholipid dependent N-acylation of the N-terminal cysteine of apolipoprotein, the last step in lipoprotein maturation. In Verminephrobacter eiseniae (strain EF01-2), this protein is Apolipoprotein N-acyltransferase.